A 278-amino-acid polypeptide reads, in one-letter code: MQICQSIHSDHARQLDTAGLRREFLIENIFVSDEYTMTYSHIDRIIVGGILPVEKTVSIGDEVGKQLGVSYFLERRELGVINIGGPGLITVDGQVYEIGNQEALYVGKGAKEVTFNSLESSKPAKFYYNSAPAHTTYPNKKITLAEAAPQTLGDDATSNRRTINKYIVPDVLPTCQLTMGLTKLAPGNLWNTMPCHTHDRRMEVYFYFDMDEETAVFHMMGQAQETRHLLVHNEQAVISPSWSIHSGVGTKRYTFIWGMVGENQVFGDMDHIAVSELR.

Zn(2+) contacts are provided by histidine 196, histidine 198, glutamate 203, and histidine 245.

It belongs to the KduI family. It depends on Zn(2+) as a cofactor.

The enzyme catalyses 5-dehydro-4-deoxy-D-glucuronate = 3-deoxy-D-glycero-2,5-hexodiulosonate. Its pathway is glycan metabolism; pectin degradation; 2-dehydro-3-deoxy-D-gluconate from pectin: step 4/5. In terms of biological role, catalyzes the isomerization of 5-dehydro-4-deoxy-D-glucuronate to 3-deoxy-D-glycero-2,5-hexodiulosonate. The protein is 4-deoxy-L-threo-5-hexosulose-uronate ketol-isomerase of Yersinia enterocolitica serotype O:8 / biotype 1B (strain NCTC 13174 / 8081).